We begin with the raw amino-acid sequence, 279 residues long: Acyl-[acyl-carrier-protein]--UDP-N-acetylglucosamine O-acyltransferase (279 aa).

The segment at I256 to S279 is disordered.

It belongs to the transferase hexapeptide repeat family. LpxA subfamily. Homotrimer.

The protein resides in the cytoplasm. It carries out the reaction a (3R)-hydroxyacyl-[ACP] + UDP-N-acetyl-alpha-D-glucosamine = a UDP-3-O-[(3R)-3-hydroxyacyl]-N-acetyl-alpha-D-glucosamine + holo-[ACP]. Its pathway is glycolipid biosynthesis; lipid IV(A) biosynthesis; lipid IV(A) from (3R)-3-hydroxytetradecanoyl-[acyl-carrier-protein] and UDP-N-acetyl-alpha-D-glucosamine: step 1/6. Its function is as follows. Involved in the biosynthesis of lipid A, a phosphorylated glycolipid that anchors the lipopolysaccharide to the outer membrane of the cell. In Chlamydia caviae (strain ATCC VR-813 / DSM 19441 / 03DC25 / GPIC) (Chlamydophila caviae), this protein is Acyl-[acyl-carrier-protein]--UDP-N-acetylglucosamine O-acyltransferase.